We begin with the raw amino-acid sequence, 339 residues long: UPF0324 membrane protein spyM18_1033 (339 aa).

The next 9 helical transmembrane spans lie at 7-24, 28-50, 57-79, 84-106, 118-140, 150-172, 256-275, 290-307, and 314-336; these read KLPG…AWYL, FPII…FYGH, GISF…GLNL, AVGM…VAYG, ATLV…APVI, AISV…GQLL, FILF…SFGV, FIVM…LVKL, and AILL…QLSL.

This sequence belongs to the UPF0324 family.

The protein resides in the cell membrane. The protein is UPF0324 membrane protein spyM18_1033 of Streptococcus pyogenes serotype M18 (strain MGAS8232).